A 130-amino-acid chain; its full sequence is Small ribosomal subunit protein uS8 (130 aa).

It belongs to the universal ribosomal protein uS8 family. In terms of assembly, part of the 30S ribosomal subunit.

In terms of biological role, one of the primary rRNA binding proteins, it binds directly to 16S rRNA central domain where it helps coordinate assembly of the platform of the 30S subunit. In Halorubrum lacusprofundi (strain ATCC 49239 / DSM 5036 / JCM 8891 / ACAM 34), this protein is Small ribosomal subunit protein uS8.